The primary structure comprises 355 residues: Protein RecA (355 aa).

Residue 67 to 74 (GPESSGKT) coordinates ATP.

This sequence belongs to the RecA family.

It localises to the cytoplasm. Its function is as follows. Can catalyze the hydrolysis of ATP in the presence of single-stranded DNA, the ATP-dependent uptake of single-stranded DNA by duplex DNA, and the ATP-dependent hybridization of homologous single-stranded DNAs. It interacts with LexA causing its activation and leading to its autocatalytic cleavage. In Histophilus somni (strain 2336) (Haemophilus somnus), this protein is Protein RecA.